The sequence spans 227 residues: Octanoyltransferase (227 aa).

The BPL/LPL catalytic domain maps to 31-209 (ANTIDEIWLV…VFLSLLGGTN (179 aa)). Residues 71–78 (RGGKITYH), 139–141 (SIG), and 152–154 (GLA) contribute to the substrate site. C170 (acyl-thioester intermediate) is an active-site residue.

The protein belongs to the LipB family.

The protein resides in the cytoplasm. The enzyme catalyses octanoyl-[ACP] + L-lysyl-[protein] = N(6)-octanoyl-L-lysyl-[protein] + holo-[ACP] + H(+). It participates in protein modification; protein lipoylation via endogenous pathway; protein N(6)-(lipoyl)lysine from octanoyl-[acyl-carrier-protein]: step 1/2. Its function is as follows. Catalyzes the transfer of endogenously produced octanoic acid from octanoyl-acyl-carrier-protein onto the lipoyl domains of lipoate-dependent enzymes. Lipoyl-ACP can also act as a substrate although octanoyl-ACP is likely to be the physiological substrate. In Baumannia cicadellinicola subsp. Homalodisca coagulata, this protein is Octanoyltransferase.